Here is a 124-residue protein sequence, read N- to C-terminus: Glycine cleavage system H protein (124 aa).

In terms of domain architecture, Lipoyl-binding spans 22–104 (LIVTGISDHA…YGKGWIYKMK (83 aa)). Lysine 63 carries the N6-lipoyllysine modification.

Belongs to the GcvH family. The glycine cleavage system is composed of four proteins: P, T, L and H. The cofactor is (R)-lipoate.

The glycine cleavage system catalyzes the degradation of glycine. The H protein shuttles the methylamine group of glycine from the P protein to the T protein. The protein is Glycine cleavage system H protein of Acinetobacter baylyi (strain ATCC 33305 / BD413 / ADP1).